The primary structure comprises 414 residues: Methyltransferase-like protein 2 (414 aa).

A disordered region spans residues 56-77 (LNQHSSESNPKKRKRKQKNSSF).

It belongs to the MT-A70-like family.

Probable methyltransferase. This is Methyltransferase-like protein 2 from Arabidopsis thaliana (Mouse-ear cress).